The primary structure comprises 178 residues: Large ribosomal subunit protein bL25 (178 aa).

The protein belongs to the bacterial ribosomal protein bL25 family. CTC subfamily. As to quaternary structure, part of the 50S ribosomal subunit; part of the 5S rRNA/L5/L18/L25 subcomplex. Contacts the 5S rRNA. Binds to the 5S rRNA independently of L5 and L18.

In terms of biological role, this is one of the proteins that binds to the 5S RNA in the ribosome where it forms part of the central protuberance. The polypeptide is Large ribosomal subunit protein bL25 (Helicobacter pylori (strain G27)).